Reading from the N-terminus, the 277-residue chain is Diaminopimelate epimerase (277 aa).

Asn13, Gln46, and Asn65 together coordinate substrate. The Proton donor role is filled by Cys74. Substrate is bound by residues 75–76 (GN), Asn158, Asn191, and 209–210 (ER). Cys218 serves as the catalytic Proton acceptor. Position 219 to 220 (219 to 220 (GT)) interacts with substrate.

It belongs to the diaminopimelate epimerase family. Homodimer.

Its subcellular location is the cytoplasm. It catalyses the reaction (2S,6S)-2,6-diaminopimelate = meso-2,6-diaminopimelate. It participates in amino-acid biosynthesis; L-lysine biosynthesis via DAP pathway; DL-2,6-diaminopimelate from LL-2,6-diaminopimelate: step 1/1. Its function is as follows. Catalyzes the stereoinversion of LL-2,6-diaminopimelate (L,L-DAP) to meso-diaminopimelate (meso-DAP), a precursor of L-lysine and an essential component of the bacterial peptidoglycan. The chain is Diaminopimelate epimerase from Nitrosospira multiformis (strain ATCC 25196 / NCIMB 11849 / C 71).